The primary structure comprises 61 residues: Large ribosomal subunit protein bL32 (61 aa).

Over residues 1–16 the composition is skewed to basic residues; that stretch reads MAVPKKKTSKSRKNMR. Positions 1-20 are disordered; sequence MAVPKKKTSKSRKNMRRAHD.

Belongs to the bacterial ribosomal protein bL32 family.

The protein is Large ribosomal subunit protein bL32 of Pelobacter propionicus (strain DSM 2379 / NBRC 103807 / OttBd1).